Here is a 509-residue protein sequence, read N- to C-terminus: Zinc finger CCCH-type with G patch domain-containing protein (509 aa).

The C3H1-type zinc-finger motif lies at 155-178; the sequence is PCNYYLEGECRFDEIRCRYSHGAL. Residues 254–277 form a disordered region; that stretch reads EDELTSEDSSSSPHDESSDEIDSD. One can recognise a G-patch domain in the interval 310 to 356; it reads TRGIGSKLMEKMGYIHGTGLGSEGRGIVTPVSAQILPQGRSLDACME. The segment at 407 to 430 is disordered; sequence LGGGESRHQGDQAAKKAKTNDLQQ. Positions 411–420 are enriched in basic and acidic residues; it reads ESRHQGDQAA.

The protein resides in the nucleus. Functionally, transcription repressor. This chain is Zinc finger CCCH-type with G patch domain-containing protein, found in Drosophila pseudoobscura pseudoobscura (Fruit fly).